The sequence spans 213 residues: Orotate phosphoribosyltransferase (213 aa).

Residue K26 coordinates 5-phospho-alpha-D-ribose 1-diphosphate. Orotate is bound at residue 34-35 (FF). Residues 72 to 73 (YK), R99, K100, K103, H105, and 124 to 132 (DDVITAGTA) contribute to the 5-phospho-alpha-D-ribose 1-diphosphate site. Orotate is bound by residues T128 and R156.

Belongs to the purine/pyrimidine phosphoribosyltransferase family. PyrE subfamily. In terms of assembly, homodimer. The cofactor is Mg(2+).

It carries out the reaction orotidine 5'-phosphate + diphosphate = orotate + 5-phospho-alpha-D-ribose 1-diphosphate. Its pathway is pyrimidine metabolism; UMP biosynthesis via de novo pathway; UMP from orotate: step 1/2. Its function is as follows. Catalyzes the transfer of a ribosyl phosphate group from 5-phosphoribose 1-diphosphate to orotate, leading to the formation of orotidine monophosphate (OMP). In Pectobacterium carotovorum subsp. carotovorum (strain PC1), this protein is Orotate phosphoribosyltransferase.